The sequence spans 227 residues: Phosphoglycolate phosphatase (227 aa).

The active-site Nucleophile is the Asp-11. Asp-11 and Asp-13 together coordinate Mg(2+). Lys-155 is a substrate binding site. Residues Asp-178 and Asp-182 each contribute to the Mg(2+) site.

This sequence belongs to the archaeal SPP-like hydrolase family. Requires Mg(2+) as cofactor.

The catalysed reaction is 2-phosphoglycolate + H2O = glycolate + phosphate. Catalyzes the dephosphorylation of 2-phosphoglycolate. The protein is Phosphoglycolate phosphatase of Haloarcula marismortui (strain ATCC 43049 / DSM 3752 / JCM 8966 / VKM B-1809) (Halobacterium marismortui).